Here is a 320-residue protein sequence, read N- to C-terminus: Heptaprenyl diphosphate synthase component 2 (320 aa).

Lys-45, Arg-48, and His-77 together coordinate isopentenyl diphosphate. 2 residues coordinate Mg(2+): Asp-84 and Asp-88. Arg-93 lines the all-trans-hexaprenyl diphosphate pocket. Residue Arg-94 participates in isopentenyl diphosphate binding. 3 residues coordinate all-trans-hexaprenyl diphosphate: Lys-170, Thr-171, and Gln-208.

It belongs to the FPP/GGPP synthase family. Heterodimer of component I and II. The cofactor is Mg(2+).

The enzyme catalyses 4 isopentenyl diphosphate + (2E,6E)-farnesyl diphosphate = all-trans-heptaprenyl diphosphate + 4 diphosphate. In terms of biological role, supplies heptaprenyl diphosphate, the precursor for the side chain of the isoprenoid quinone menaquinone-7 (MQ-7). The protein is Heptaprenyl diphosphate synthase component 2 (hepT) of Geobacillus stearothermophilus (Bacillus stearothermophilus).